The sequence spans 402 residues: Flavohemoprotein (402 aa).

A Globin domain is found at 1-138 (MLSPEVRALV…LADLLIGRER (138 aa)). Residue His85 participates in heme b binding. Residues Tyr95 and Glu137 each act as charge relay system in the active site. The reductase stretch occupies residues 149 to 402 (GGWTGWRAFK…AEVFGTGGVA (254 aa)). The region spanning 152 to 261 (TGWRAFKVVR…SPPQGDFTLD (110 aa)) is the FAD-binding FR-type domain. FAD-binding positions include Tyr190 and 206-209 (RQYS). 274-279 (GVGLTP) is a binding site for NADP(+). 395 to 398 (VFGT) provides a ligand contact to FAD.

It belongs to the globin family. Two-domain flavohemoproteins subfamily. In the C-terminal section; belongs to the flavoprotein pyridine nucleotide cytochrome reductase family. It depends on heme b as a cofactor. FAD is required as a cofactor.

It carries out the reaction 2 nitric oxide + NADPH + 2 O2 = 2 nitrate + NADP(+) + H(+). The enzyme catalyses 2 nitric oxide + NADH + 2 O2 = 2 nitrate + NAD(+) + H(+). Functionally, is involved in NO detoxification in an aerobic process, termed nitric oxide dioxygenase (NOD) reaction that utilizes O(2) and NAD(P)H to convert NO to nitrate, which protects the bacterium from various noxious nitrogen compounds. Therefore, plays a central role in the inducible response to nitrosative stress. The polypeptide is Flavohemoprotein (Bordetella bronchiseptica (strain ATCC BAA-588 / NCTC 13252 / RB50) (Alcaligenes bronchisepticus)).